A 469-amino-acid polypeptide reads, in one-letter code: Small ribosomal subunit protein mS29 (469 aa).

L150 serves as a coordination point for ATP.

Belongs to the mitochondrion-specific ribosomal protein mS29 family. As to quaternary structure, component of the mitochondrial small ribosomal subunit (mt-SSU). Mature N.crassa 74S mitochondrial ribosomes consist of a small (37S) and a large (54S) subunit. The 37S small subunit contains a 16S ribosomal RNA (16S mt-rRNA) and 32 different proteins. The 54S large subunit contains a 23S rRNA (23S mt-rRNA) and 42 different proteins.

The protein localises to the mitochondrion. Its function is as follows. Component of the mitochondrial ribosome (mitoribosome), a dedicated translation machinery responsible for the synthesis of mitochondrial genome-encoded proteins, including at least some of the essential transmembrane subunits of the mitochondrial respiratory chain. The mitoribosomes are attached to the mitochondrial inner membrane and translation products are cotranslationally integrated into the membrane. This chain is Small ribosomal subunit protein mS29 (rsm23), found in Neurospora crassa (strain ATCC 24698 / 74-OR23-1A / CBS 708.71 / DSM 1257 / FGSC 987).